The primary structure comprises 303 residues: ATP synthase gamma chain (303 aa).

The protein belongs to the ATPase gamma chain family. As to quaternary structure, F-type ATPases have 2 components, CF(1) - the catalytic core - and CF(0) - the membrane proton channel. CF(1) has five subunits: alpha(3), beta(3), gamma(1), delta(1), epsilon(1). CF(0) has three main subunits: a, b and c.

It localises to the cell inner membrane. Produces ATP from ADP in the presence of a proton gradient across the membrane. The gamma chain is believed to be important in regulating ATPase activity and the flow of protons through the CF(0) complex. This Bartonella henselae (strain ATCC 49882 / DSM 28221 / CCUG 30454 / Houston 1) (Rochalimaea henselae) protein is ATP synthase gamma chain.